Reading from the N-terminus, the 514-residue chain is Peptide chain release factor 3 (514 aa).

Positions 8-268 constitute a tr-type G domain; it reads KKRRTFAIIS…IFLKFAPEPH (261 aa). GTP contacts are provided by residues 17–24, 85–89, and 139–142; these read SHPDAGKT, DTPGH, and NKLD.

This sequence belongs to the TRAFAC class translation factor GTPase superfamily. Classic translation factor GTPase family. PrfC subfamily.

The protein localises to the cytoplasm. Its function is as follows. Increases the formation of ribosomal termination complexes and stimulates activities of RF-1 and RF-2. It binds guanine nucleotides and has strong preference for UGA stop codons. It may interact directly with the ribosome. The stimulation of RF-1 and RF-2 is significantly reduced by GTP and GDP, but not by GMP. The sequence is that of Peptide chain release factor 3 from Streptococcus pneumoniae (strain CGSP14).